Reading from the N-terminus, the 919-residue chain is Valine--tRNA ligase (919 aa).

Positions 66–76 (PNVTGQLHMGH) match the 'HIGH' region motif. Residues 562 to 566 (KMSKS) carry the 'KMSKS' region motif. Position 565 (K565) interacts with ATP. A coiled-coil region spans residues 852 to 919 (TVDKEAERKR…RISARLEELK (68 aa)).

The protein belongs to the class-I aminoacyl-tRNA synthetase family. ValS type 1 subfamily. As to quaternary structure, monomer.

The protein localises to the cytoplasm. It carries out the reaction tRNA(Val) + L-valine + ATP = L-valyl-tRNA(Val) + AMP + diphosphate. Functionally, catalyzes the attachment of valine to tRNA(Val). As ValRS can inadvertently accommodate and process structurally similar amino acids such as threonine, to avoid such errors, it has a 'posttransfer' editing activity that hydrolyzes mischarged Thr-tRNA(Val) in a tRNA-dependent manner. The polypeptide is Valine--tRNA ligase (Corynebacterium diphtheriae (strain ATCC 700971 / NCTC 13129 / Biotype gravis)).